Here is a 341-residue protein sequence, read N- to C-terminus: Anthranilate phosphoribosyltransferase (341 aa).

5-phospho-alpha-D-ribose 1-diphosphate-binding positions include glycine 79, 82–83 (GD), threonine 87, 89–92 (NIST), 107–115 (KHGNRAVSS), and serine 119. Residue glycine 79 coordinates anthranilate. Serine 91 is a Mg(2+) binding site. Anthranilate is bound at residue asparagine 110. Arginine 165 is an anthranilate binding site. Residues aspartate 224 and glutamate 225 each coordinate Mg(2+).

The protein belongs to the anthranilate phosphoribosyltransferase family. In terms of assembly, homodimer. The cofactor is Mg(2+).

The enzyme catalyses N-(5-phospho-beta-D-ribosyl)anthranilate + diphosphate = 5-phospho-alpha-D-ribose 1-diphosphate + anthranilate. Its pathway is amino-acid biosynthesis; L-tryptophan biosynthesis; L-tryptophan from chorismate: step 2/5. Functionally, catalyzes the transfer of the phosphoribosyl group of 5-phosphorylribose-1-pyrophosphate (PRPP) to anthranilate to yield N-(5'-phosphoribosyl)-anthranilate (PRA). The protein is Anthranilate phosphoribosyltransferase of Bacillus cereus (strain AH187).